The following is a 27-amino-acid chain: Toxin TdII-4 (27 aa).

Positions 1–27 (KDGYLMEPNGCKLGCLTRPAKYCWXEE) constitute an LCN-type CS-alpha/beta domain.

It belongs to the long (4 C-C) scorpion toxin superfamily. Sodium channel inhibitor family. Beta subfamily. Expressed by the venom gland.

The protein resides in the secreted. In terms of biological role, beta toxins bind voltage-independently at site-4 of sodium channels (Nav) and shift the voltage of activation toward more negative potentials thereby affecting sodium channel activation and promoting spontaneous and repetitive firing. This toxin is active against mammals and also affects neuromuscular preparations of frog. The chain is Toxin TdII-4 from Tityus discrepans (Venezuelan scorpion).